Reading from the N-terminus, the 369-residue chain is Putative agmatine deiminase (369 aa).

Residue Cys355 is the Amidino-cysteine intermediate of the active site.

This sequence belongs to the agmatine deiminase family.

It catalyses the reaction agmatine + H2O = N-carbamoylputrescine + NH4(+). The protein is Putative agmatine deiminase of Marinomonas sp. (strain MWYL1).